Here is a 309-residue protein sequence, read N- to C-terminus: General transcription factor IIH subunit 3 (309 aa).

Residues 269–286 (CSVCLSIFCNFSPICTTC) form a C4-type zinc finger.

It belongs to the TFB4 family. In terms of assembly, part of a TFIID-containing RNA polymerase II pre-initiation complex that is composed of TBP and at least GTF2A1, GTF2A2, GTF2E1, GTF2E2, GTF2F1, GTF2H2, GTF2H3, GTF2H4, GTF2H5, GTF2B, TCEA1, ERCC2, ERCC3, TAF1, TAF2, TAF3, TAF4, TAF5, TAF6, TAF7, TAF8, TAF9, TAF10, TAF11, TAF12 and TAF13. Component of the 7-subunit TFIIH core complex composed of XPB/ERCC3, XPD/ERCC2, GTF2H1, GTF2H2, GTF2H3, GTF2H4 and GTF2H5, which is active in NER. The core complex associates with the 3-subunit CDK-activating kinase (CAK) module composed of CCNH/cyclin H, CDK7 and MNAT1 to form the 10-subunit holoenzyme (holo-TFIIH) active in transcription. Interacts with RARA; the interaction requires prior phosphorylation of RARA on 'Ser-369' which then enhances interaction of RARA with CDK7.

It localises to the nucleus. Its function is as follows. Component of the general transcription and DNA repair factor IIH (TFIIH) core complex, which is involved in general and transcription-coupled nucleotide excision repair (NER) of damaged DNA and, when complexed to CAK, in RNA transcription by RNA polymerase II. In NER, TFIIH acts by opening DNA around the lesion to allow the excision of the damaged oligonucleotide and its replacement by a new DNA fragment. In transcription, TFIIH has an essential role in transcription initiation. When the pre-initiation complex (PIC) has been established, TFIIH is required for promoter opening and promoter escape. Phosphorylation of the C-terminal tail (CTD) of the largest subunit of RNA polymerase II by the kinase module CAK controls the initiation of transcription. The protein is General transcription factor IIH subunit 3 (Gtf2h3) of Mus musculus (Mouse).